The primary structure comprises 428 residues: Dihydroorotase (428 aa).

Zn(2+)-binding residues include H59 and H61. Substrate-binding positions include 61–63 (HLR) and N93. Residues D151, H178, and H231 each contribute to the Zn(2+) site. N277 is a substrate binding site. Position 304 (D304) interacts with Zn(2+). D304 is an active-site residue. Substrate-binding positions include H308 and 322 to 323 (FG).

It belongs to the metallo-dependent hydrolases superfamily. DHOase family. Class I DHOase subfamily. Zn(2+) is required as a cofactor.

It carries out the reaction (S)-dihydroorotate + H2O = N-carbamoyl-L-aspartate + H(+). It functions in the pathway pyrimidine metabolism; UMP biosynthesis via de novo pathway; (S)-dihydroorotate from bicarbonate: step 3/3. Functionally, catalyzes the reversible cyclization of carbamoyl aspartate to dihydroorotate. This Bacillus pumilus (strain SAFR-032) protein is Dihydroorotase.